A 396-amino-acid polypeptide reads, in one-letter code: Elongation factor Tu (396 aa).

The tr-type G domain maps to 10-206 (KPHVNIGTIG…AVDSYIPEPV (197 aa)). The tract at residues 19–26 (GHVDHGKT) is G1. 19-26 (GHVDHGKT) is a binding site for GTP. T26 is a Mg(2+) binding site. Residues 60–64 (GITIA) are G2. Positions 81 to 84 (DCPG) are G3. GTP-binding positions include 81-85 (DCPGH) and 136-139 (NKAD). The G4 stretch occupies residues 136 to 139 (NKAD). Positions 174-176 (SAL) are G5.

It belongs to the TRAFAC class translation factor GTPase superfamily. Classic translation factor GTPase family. EF-Tu/EF-1A subfamily. As to quaternary structure, monomer.

It is found in the cytoplasm. It catalyses the reaction GTP + H2O = GDP + phosphate + H(+). Functionally, GTP hydrolase that promotes the GTP-dependent binding of aminoacyl-tRNA to the A-site of ribosomes during protein biosynthesis. The chain is Elongation factor Tu from Geotalea uraniireducens (strain Rf4) (Geobacter uraniireducens).